Here is a 439-residue protein sequence, read N- to C-terminus: ATP-dependent protease ATPase subunit HslU (439 aa).

ATP is bound by residues Ile17, 59-64 (GVGKTE), Asp251, Glu317, and Arg389.

The protein belongs to the ClpX chaperone family. HslU subfamily. A double ring-shaped homohexamer of HslV is capped on each side by a ring-shaped HslU homohexamer. The assembly of the HslU/HslV complex is dependent on binding of ATP.

The protein resides in the cytoplasm. Its function is as follows. ATPase subunit of a proteasome-like degradation complex; this subunit has chaperone activity. The binding of ATP and its subsequent hydrolysis by HslU are essential for unfolding of protein substrates subsequently hydrolyzed by HslV. HslU recognizes the N-terminal part of its protein substrates and unfolds these before they are guided to HslV for hydrolysis. The protein is ATP-dependent protease ATPase subunit HslU of Campylobacter jejuni subsp. doylei (strain ATCC BAA-1458 / RM4099 / 269.97).